A 65-amino-acid polypeptide reads, in one-letter code: Large ribosomal subunit protein bL35 (65 aa).

This sequence belongs to the bacterial ribosomal protein bL35 family.

The protein is Large ribosomal subunit protein bL35 of Paraburkholderia xenovorans (strain LB400).